The following is a 200-amino-acid chain: MTDLALIDAGGANLGSVRYALERLGVEARVVRDAQGLQGAERVILPGVGAAPEAMARLRAQGLIEPLQQLQVPLIGICLGMQLLFEHSEEGDVDCLGMLPGIVRHMTPALGIRVPHMGWNQLVPMRDSALLAGLPERASAYFVHGYAAPVTADTVAACDHGGLFTAVVQSGLRCGAQFHPERSADTGARILRNFLEMSFP.

One can recognise a Glutamine amidotransferase type-1 domain in the interval 3 to 200 (DLALIDAGGA…LRNFLEMSFP (198 aa)). The Nucleophile role is filled by cysteine 78. Active-site residues include histidine 179 and glutamate 181.

In terms of assembly, heterodimer of HisH and HisF.

The protein resides in the cytoplasm. The catalysed reaction is 5-[(5-phospho-1-deoxy-D-ribulos-1-ylimino)methylamino]-1-(5-phospho-beta-D-ribosyl)imidazole-4-carboxamide + L-glutamine = D-erythro-1-(imidazol-4-yl)glycerol 3-phosphate + 5-amino-1-(5-phospho-beta-D-ribosyl)imidazole-4-carboxamide + L-glutamate + H(+). It carries out the reaction L-glutamine + H2O = L-glutamate + NH4(+). Its pathway is amino-acid biosynthesis; L-histidine biosynthesis; L-histidine from 5-phospho-alpha-D-ribose 1-diphosphate: step 5/9. Functionally, IGPS catalyzes the conversion of PRFAR and glutamine to IGP, AICAR and glutamate. The HisH subunit catalyzes the hydrolysis of glutamine to glutamate and ammonia as part of the synthesis of IGP and AICAR. The resulting ammonia molecule is channeled to the active site of HisF. This Xanthomonas campestris pv. campestris (strain 8004) protein is Imidazole glycerol phosphate synthase subunit HisH.